Reading from the N-terminus, the 570-residue chain is Urease subunit alpha 1 (570 aa).

Residues 131–570 (GGIDTHVHFI…VPMAQRYFLF (440 aa)) enclose the Urease domain. Residues His-136, His-138, and Lys-219 each coordinate Ni(2+). Lys-219 carries the post-translational modification N6-carboxylysine. His-221 contacts substrate. Residues His-248 and His-274 each coordinate Ni(2+). The active-site Proton donor is the His-322. Asp-362 serves as a coordination point for Ni(2+).

Belongs to the metallo-dependent hydrolases superfamily. Urease alpha subunit family. Heterotrimer of UreA (gamma), UreB (beta) and UreC (alpha) subunits. Three heterotrimers associate to form the active enzyme. Requires Ni cation as cofactor. Carboxylation allows a single lysine to coordinate two nickel ions.

It localises to the cytoplasm. It carries out the reaction urea + 2 H2O + H(+) = hydrogencarbonate + 2 NH4(+). The protein operates within nitrogen metabolism; urea degradation; CO(2) and NH(3) from urea (urease route): step 1/1. The polypeptide is Urease subunit alpha 1 (Brucella melitensis biotype 1 (strain ATCC 23456 / CCUG 17765 / NCTC 10094 / 16M)).